The primary structure comprises 190 residues: dCTP deaminase, dUMP-forming (190 aa).

DCTP is bound by residues 101–106 (KSSLGR), D119, 127–129 (TLE), Q148, Y162, and Q174. E129 serves as the catalytic Proton donor/acceptor. A disordered region spans residues 161-190 (PYGSSSVGSKYQGQRGPTPSRSYQNFVKND). Over residues 163-190 (GSSSVGSKYQGQRGPTPSRSYQNFVKND) the composition is skewed to polar residues.

Belongs to the dCTP deaminase family. In terms of assembly, homotrimer.

The catalysed reaction is dCTP + 2 H2O = dUMP + NH4(+) + diphosphate. It functions in the pathway pyrimidine metabolism; dUMP biosynthesis; dUMP from dCTP: step 1/1. In terms of biological role, bifunctional enzyme that catalyzes both the deamination of dCTP to dUTP and the hydrolysis of dUTP to dUMP without releasing the toxic dUTP intermediate. The chain is dCTP deaminase, dUMP-forming from Mycolicibacterium vanbaalenii (strain DSM 7251 / JCM 13017 / BCRC 16820 / KCTC 9966 / NRRL B-24157 / PYR-1) (Mycobacterium vanbaalenii).